We begin with the raw amino-acid sequence, 351 residues long: Protein Wnt-4 (351 aa).

The N-terminal stretch at 1 to 22 (MTPEYFLRSLLMMILAVFSANA) is a signal peptide. Cystine bridges form between Cys78–Cys89, Cys128–Cys136, Cys138–Cys155, Cys206–Cys220, Cys208–Cys215, Cys280–Cys311, Cys296–Cys306, Cys310–Cys350, Cys326–Cys341, Cys328–Cys338, and Cys333–Cys334. The N-linked (GlcNAc...) asparagine glycan is linked to Asn88. The O-palmitoleoyl serine; by PORCN moiety is linked to residue Ser212. Asn297 is a glycosylation site (N-linked (GlcNAc...) asparagine).

Belongs to the Wnt family. Post-translationally, palmitoleoylation is required for efficient binding to frizzled receptors. Depalmitoleoylation leads to Wnt signaling pathway inhibition. Expressed in the brain and floor plate. In the developing pronephros, expressed in the proximal tubules and nephrostomes but absent from the pronephric duct.

The protein localises to the secreted. Its subcellular location is the extracellular space. The protein resides in the extracellular matrix. In terms of biological role, ligand for members of the frizzled family of seven transmembrane receptors. Plays an important role in embryonic kidney development. Acts downstream of Notch signaling during pronephric kidney development. During early pronephros development, patterns the proximal pronephric anlagen to promote glomus and nephrostome formation. Also required later in pronephros development for tubulogenesis. The protein is Protein Wnt-4 (wnt4) of Xenopus laevis (African clawed frog).